The primary structure comprises 240 residues: Ubiquinone biosynthesis O-methyltransferase (240 aa).

Arg44, Gly64, Asp85, and Met129 together coordinate S-adenosyl-L-methionine.

Belongs to the methyltransferase superfamily. UbiG/COQ3 family.

It catalyses the reaction a 3-demethylubiquinol + S-adenosyl-L-methionine = a ubiquinol + S-adenosyl-L-homocysteine + H(+). It carries out the reaction a 3-(all-trans-polyprenyl)benzene-1,2-diol + S-adenosyl-L-methionine = a 2-methoxy-6-(all-trans-polyprenyl)phenol + S-adenosyl-L-homocysteine + H(+). The protein operates within cofactor biosynthesis; ubiquinone biosynthesis. O-methyltransferase that catalyzes the 2 O-methylation steps in the ubiquinone biosynthetic pathway. The chain is Ubiquinone biosynthesis O-methyltransferase from Escherichia coli (strain SMS-3-5 / SECEC).